A 292-amino-acid polypeptide reads, in one-letter code: Malonyl-[acyl-carrier protein] O-methyltransferase (292 aa).

The protein belongs to the methyltransferase superfamily.

It catalyses the reaction malonyl-[ACP] + S-adenosyl-L-methionine = malonyl-[ACP] methyl ester + S-adenosyl-L-homocysteine. The protein operates within cofactor biosynthesis; biotin biosynthesis. Its function is as follows. Converts the free carboxyl group of a malonyl-thioester to its methyl ester by transfer of a methyl group from S-adenosyl-L-methionine (SAM). It allows to synthesize pimeloyl-ACP via the fatty acid synthetic pathway. The polypeptide is Malonyl-[acyl-carrier protein] O-methyltransferase (Alcanivorax borkumensis (strain ATCC 700651 / DSM 11573 / NCIMB 13689 / SK2)).